A 262-amino-acid chain; its full sequence is Abhydrolase domain-containing protein AFT2-1 (262 aa).

Residues 260–262 (SKL) carry the Peroxisomal targeting signal type 1 motif.

Belongs to the AB hydrolase superfamily. AKT2 hydrolase family.

It localises to the peroxisome. The protein operates within mycotoxin biosynthesis. Abhydrolase domain-containing protein; part of the gene clusters that mediate the biosynthesis of the host-selective toxins (HSTs) AF-toxins responsible for Alternaria black spot of strawberry disease by the strawberry pathotype. AF-toxin I and III are valine derivatives of 2,3-dyhydroxy-isovaleric acid and 2-hydroxy-isovaleric acid respectively, while AF II is an isoleucine derivative of 2-hydroxy-valeric acid. These derivatives are bound to a 9,10-epoxy-8-hydroxy-9-methyl-decatrienoic acid (EDA) moiety. On cellular level, AF-toxins affect plasma membrane of susceptible cells and cause a sudden increase in loss of K(+) after a few minutes of toxin treatment. The aldo-keto reductase AFTS1 catalyzes the conversion of 2-keto-isovaleric acid (2-KIV) to 2-hydroxy-isovaleric acid (2-HIV) by reduction of its ketone to an alcohol. The acyl-CoA ligase AFT1, the hydrolase AFT2 and the enoyl-CoA hydratases AFT3 and AFT6, but also the polyketide synthase AFT9, the acyl-CoA dehydrogenase AFT10, the cytochrome P450 monooxygenase AFT11 and the oxidoreductase AFT12 are all involved in the biosynthesis of the AK-, AF- and ACT-toxin common EDA structural moiety. The exact function of each enzyme, and of additional enzymes identified within the AF-toxin clusters have still to be determined. This Alternaria alternata (Alternaria rot fungus) protein is Abhydrolase domain-containing protein AFT2-1.